A 372-amino-acid polypeptide reads, in one-letter code: Proline-rich P65 protein homolog (372 aa).

A compositionally biased stretch (low complexity) spans Met-1 to Gln-37. Residues Met-1–Gln-100 form a disordered region. A run of 13 repeats spans residues Asp-29–Phe-40, Asp-41–Phe-52, Asp-53–Gln-60, Asp-61–Phe-72, Asp-73–Gln-80, Asp-81–Phe-92, Asp-93–Gln-100, Asp-101–Phe-112, Asp-113–Gln-119, Asp-120–Phe-131, Asp-132–Gln-138, Asp-139–Phe-150, and Asp-151–Phe-162. Polar residues predominate over residues Ser-38 to Gln-49. The span at Asp-53–Gln-100 shows a compositional bias: low complexity. The interval Asn-122–Phe-150 is disordered.

In Mycoplasma genitalium (strain ATCC 33530 / DSM 19775 / NCTC 10195 / G37) (Mycoplasmoides genitalium), this protein is Proline-rich P65 protein homolog.